The chain runs to 218 residues: Capsid protein (218 aa).

Residues 1–28 form a disordered region; it reads MDKSESTSAGRNRRRRPRRGSRSAPSSA. Residues 11 to 21 show a composition bias toward basic residues; the sequence is RNRRRRPRRGS.

Belongs to the cucumovirus capsid protein family.

The protein resides in the virion. Its function is as follows. Capsid protein. Probably binds RNA and plays a role in packaging. The protein is Capsid protein of Cucurbita pepo (Vegetable marrow).